A 415-amino-acid polypeptide reads, in one-letter code: Corticotropin-releasing factor receptor 1 (415 aa).

The signal sequence occupies residues 1–24 (MLLAKTPCLLLVQVIAAGISFALT). The Extracellular portion of the chain corresponds to 25 to 111 (SLQDQCETLQ…CQEILKQEKK (87 aa)). Intrachain disulfides connect C30–C54, C44–C87, and C68–C102. N-linked (GlcNAc...) asparagine glycans are attached at residues N38, N45, N78, and N90. A helical membrane pass occupies residues 112–142 (TKVHYHIAIVINFLGHSISLCALLVAFILFL). Residues 143 to 149 (RLRSIRC) are Cytoplasmic-facing. Residues 150–174 (LRNIIHWNLITAFILRNVTWFVMQL) form a helical membrane-spanning segment. Topologically, residues 175 to 189 (TLSHEAHDSNVVWCR) are extracellular. A disulfide bridge connects residues C188 and C258. The helical transmembrane segment at 190–218 (LVTIAHNYFYVTNFFWMFGEGCYLHTAIV) threads the bilayer. Residues 219-225 (LTYSTDK) lie on the Cytoplasmic side of the membrane. The helical transmembrane segment at 226–253 (LRKWMFICIGWCIPFPIIVAWAIGKLYY) threads the bilayer. Residues 254-269 (DNEKCWFGKKAGVYTD) are Extracellular-facing. A helical membrane pass occupies residues 270–295 (FIYQGPVILVLLINFIFLFNIVRILM). Residues 296–306 (TKLRASTTSET) are Cytoplasmic-facing. Residues 307–331 (IQYRKAVKATLVLLPLLGITYMLFF) form a helical membrane-spanning segment. At 332–338 (VTPGEDE) the chain is on the extracellular side. A helical transmembrane segment spans residues 339–368 (ISRIVFIYFNSFLQSFQGFFVSVFYCFLNS). The Cytoplasmic segment spans residues 369-415 (EVRSAVRKRWHRWQDKHSIRARVARAMSIPTSPTRISFHSIKQSSAI).

It belongs to the G-protein coupled receptor 2 family. In terms of assembly, interacts (via N-terminal extracellular domain) with CRF and UCN.

It localises to the cell membrane. In terms of biological role, G-protein coupled receptor for CRH (corticotropin-releasing factor) and UCN (urocortin). Has high affinity for CRH and UCN. Ligand binding causes a conformation change that triggers signaling via guanine nucleotide-binding proteins (G proteins) and down-stream effectors, such as adenylate cyclase. Promotes the activation of adenylate cyclase, leading to increased intracellular cAMP levels. The protein is Corticotropin-releasing factor receptor 1 (crhr1) of Xenopus laevis (African clawed frog).